The following is a 633-amino-acid chain: MAAAAAAATTAACSSGSAGTDAAGASGLQQPPPQPQPQPAAAAPAQPPPEPPRKPRMDPRRRQAALSFLTNISLDGRLPPQDAEWGGGEEGGAAKPGAGGACGARTRFSLLAAAERGGCIALAAPGTPAAGLAAGSGPCLPQPSSLPPLIPGGHATVSGPGVARGFASPLGAGRASGEQWQPPRPAPLAACAQLQLLDGSGAAGQEELEEDDAFISVQVPAAAFLGSGTPGSGSGSRGRLNSFTQGILPIAFSRPTSQNYCSLEQPGQGGSTSAFEQLQRSRRRLISQRSSLETLEDIEENAPLRRCRTLSGSPRPKNFKKIHFIKNMRQHDTRNGRIVLISGRRSFCSIFSVLPYRDSTQVGDLKLDGGRQSTGAVSLKEIIGLEGVELGADGKTVSYTQFLLPTNAFGARRNTIDSTSSFSQFRNLSHRSLSIGRASGTQGSLDTGSDLGDFMDYDPNLLDDPQWPCGKHKRVLIFPSYMTTVIDYVKPSDLKKDMNETFKEKFPHIKLTLSKIRSLKREMRKLAQEDCGLEEPTVAMAFVYFEKLALKGKLNKQNRKLCAGACVLLAAKIGSDLKKHEVKHLIDKLEEKFRLNRRELIAFEFPVLVALEFALHLPEHEVMPHYRRLVQSS.

Over residues 1–29 (MAAAAAAATTAACSSGSAGTDAAGASGLQ) the composition is skewed to low complexity. The tract at residues 1-99 (MAAAAAAATT…EGGAAKPGAG (99 aa)) is disordered. Positions 1-109 (MAAAAAAATT…GACGARTRFS (109 aa)) are interaction with TDRD7. The span at 51-61 (PPRKPRMDPRR) shows a compositional bias: basic and acidic residues. Residues Ser-168 and Ser-287 each carry the phosphoserine modification. The tract at residues 179-492 (QWQPPRPAPL…TTVIDYVKPS (314 aa)) is interaction with CDK3. Position 313 is a phosphoserine; by CDK2 and CDK3 (Ser-313). Phosphothreonine is present on Thr-415.

Belongs to the cyclin family. Found in a complex with p53/TP53. Found in a number of complexes with CDK2, CDK3, CDK5, ABL1, TDRD7, CDK17, CCNA1, CCNE1 and TP73. Interacts with CDK2, CDK3, CDK5, ABL1 and TDRD7. In terms of processing, phosphorylated on Ser-313 by CCNE1/CDK3. Phosphorylated on serine/threonine residues by CDK5 and on tyrosine residues by ABL1. Also phosphorylated in vitro by CCNA1/CDK2, CCNE1/CDK2, CCNA1/CDK3 and CCNE1/CDK3. In terms of tissue distribution, expressed in breast, pancreas, colon, head and neck (at protein level). Strongly decreased in more than half of cases of atypical endometrial hyperplasia and in more than 90% of endometrial cancers.

The protein resides in the nucleus. Its subcellular location is the cytoplasm. Cyclin-dependent kinase binding protein. Enhances cyclin-dependent kinase tyrosine phosphorylation by nonreceptor tyrosine kinases, such as that of CDK5 by activated ABL1, which leads to increased CDK5 activity and is critical for neuronal development, and that of CDK2 by WEE1, which leads to decreased CDK2 activity and growth inhibition. Positively affects neuronal outgrowth. Plays a role as a regulator for p53/p73-induced cell death. This is CDK5 and ABL1 enzyme substrate 1 (CABLES1) from Homo sapiens (Human).